A 414-amino-acid polypeptide reads, in one-letter code: MTTQHSPGLFRRLAHGSLVKQILAGLILGILLAWISKPAAEAVGLLGTLFVGALKAVAPILVLMLVMASIANHQHGQKTNIRPILFLYLLGTFSAALAAVIFSFAFPSTLHLSSSAGDISPPSGIVEVMRGLVMSMVSNPIDALLKGNYIGILVWAIGLGFALRHGNETTKNLVNDMSNAVTFMVKLVIHFAPIGIFGLVSSTLATTGFSTLWGYAQLLVVLVGCMLLVALVVNPLLVWWKIRRNPFPLVLLCLRESGVYAFFTRSSAANIPVNMALCEKLNLDRDTYSVSIPLGATINMAGAAITITVLTLAAVNTLGIPVDLPTALLLSVVASLCACGASGVAGGSLLLIPLACNMFGISNDIAMQVVAVGFIIGVLQDSCETALNSSTDVLFTAAACQAEDDRLANSALRN.

Residues 2-15 (TTQHSPGLFRRLAH) are Cytoplasmic-facing. Residues 16–36 (GSLVKQILAGLILGILLAWIS) form a helical membrane-spanning segment. Over 37–45 (KPAAEAVGL) the chain is Periplasmic. The chain crosses the membrane as a helical span at residues 46–66 (LGTLFVGALKAVAPILVLMLV). At 67–83 (MASIANHQHGQKTNIRP) the chain is on the cytoplasmic side. The helical transmembrane segment at 84–104 (ILFLYLLGTFSAALAAVIFSF) threads the bilayer. Residues 105 to 142 (AFPSTLHLSSSAGDISPPSGIVEVMRGLVMSMVSNPID) lie on the Periplasmic side of the membrane. A helical membrane pass occupies residues 143-163 (ALLKGNYIGILVWAIGLGFAL). Topologically, residues 164 to 179 (RHGNETTKNLVNDMSN) are cytoplasmic. Residues 180–200 (AVTFMVKLVIHFAPIGIFGLV) form a helical membrane-spanning segment. At 201 to 217 (SSTLATTGFSTLWGYAQ) the chain is on the periplasmic side. The chain crosses the membrane as a helical span at residues 218–238 (LLVVLVGCMLLVALVVNPLLV). Over 239–299 (WWKIRRNPFP…VSIPLGATIN (61 aa)) the chain is Cytoplasmic. The chain crosses the membrane as a helical span at residues 300 to 320 (MAGAAITITVLTLAAVNTLGI). Topologically, residues 321 to 331 (PVDLPTALLLS) are periplasmic. The chain crosses the membrane as a helical span at residues 332-352 (VVASLCACGASGVAGGSLLLI). Residues 353–414 (PLACNMFGIS…DRLANSALRN (62 aa)) are Cytoplasmic-facing.

This sequence belongs to the dicarboxylate/amino acid:cation symporter (DAACS) (TC 2.A.23) family.

It localises to the cell inner membrane. The catalysed reaction is L-serine(in) + Na(+)(in) = L-serine(out) + Na(+)(out). It carries out the reaction L-threonine(in) + Na(+)(in) = L-threonine(out) + Na(+)(out). In terms of biological role, involved in the import of serine and threonine into the cell, with the concomitant import of sodium (symport system). The chain is Serine/threonine transporter SstT from Escherichia coli (strain UTI89 / UPEC).